The sequence spans 137 residues: uncharacterized protein (137 aa).

It belongs to the ycf72 family.

Its subcellular location is the plastid. It localises to the chloroplast. This is an uncharacterized protein from Saccharum hybrid (Sugarcane).